The following is a 298-amino-acid chain: N-acetylmuramic acid 6-phosphate etherase (298 aa).

Residues 55-218 form the SIS domain; it reads IHAQVSGGGR…STGLMIKSGK (164 aa). The active-site Proton donor is the Glu83. The active site involves Glu114.

It belongs to the GCKR-like family. MurNAc-6-P etherase subfamily. As to quaternary structure, homodimer.

It catalyses the reaction N-acetyl-D-muramate 6-phosphate + H2O = N-acetyl-D-glucosamine 6-phosphate + (R)-lactate. Its pathway is amino-sugar metabolism; 1,6-anhydro-N-acetylmuramate degradation. It participates in amino-sugar metabolism; N-acetylmuramate degradation. It functions in the pathway cell wall biogenesis; peptidoglycan recycling. Functionally, specifically catalyzes the cleavage of the D-lactyl ether substituent of MurNAc 6-phosphate, producing GlcNAc 6-phosphate and D-lactate. Together with AnmK, is also required for the utilization of anhydro-N-acetylmuramic acid (anhMurNAc) either imported from the medium or derived from its own cell wall murein, and thus plays a role in cell wall recycling. This Escherichia coli O17:K52:H18 (strain UMN026 / ExPEC) protein is N-acetylmuramic acid 6-phosphate etherase.